Reading from the N-terminus, the 1396-residue chain is MVDITNFFKKTNKADSSQAFNRVRINIASPEQIRSWSYGEVTKPETINYRTFKPEKDGLFCAKIFGPVKDYECLCGKYKRMKYRGIVCEKCGVEVTTSKVRRERMGHIELASPIAHIWFVRSLPSRISILLDMNLKDLERVIYFEAYIVMDPGLSPLHKGDLLTEEMLQQAQNEYGEDNFIVGIGAEAIRTLLAELDLKSLRNALQEEVNNVINSDFKRKKILRRLKLIEDFIGSGNKPEWMIVTVLPIIPPELRPLVMLDAGRFASSDLNELYRRLINRNNRLKYLKKEEDGVPGIVLRNEQRMVQLSADTLFDNGKRGKAVKNSNKRPFKSLSDMLKGKQGRFRQNLLGKRVDYSGRSVIVVGPELKLHQCGLPKQMALELFKPFVYAELERCGIATTIKAAKRIVELGTPDVWNALAKVIKHHPVLLNRAPTLHCLSIQAFEPVLIEDKAIQLHPLVCTAFNADFDGDQMAVHVPLSTEAQLEARVLMMSTNNILSPANGRPIIVPDKDIVLGLYYLTLSIDGEVGEGRLFGSMAEIHHALFNKVVSLHSKIKFRKYIINADGDKVMALVNTTPGRLILGELLPDGDSISFDVVNKVMTKKGISAIVDMVYRYYGQKATVVFADKLMKLGFKYACMSGISFGMDDMIVPETKSKHVNDTLLEVQEFERQYSEGLITSGEKYNKVIDAWSRYTDRVANDMMKGIAAGDQTSVGLTNQERLNSIFMMADSEARSSVTQIKQLIGSKGLIAKASGEIIDRPILSNFCEGLTVFECFIGIPGTRKGLADTAVKTKVSGHLSRKLSESAHGYFVKREDCGTTNGLIITAVVEGGVIVVTLAEQVLGRVAVSNVYCPVTKVLILQQGEMIDEYKVELINTAGINSIKVRSVLTCELQEGVCAKCYGRDLSTGKLVAIGTAVGIVAAQSIGEPGTQLTMRTFHIGGAATRGVEASSFEAIVDGRVKIINPNFVVNSNNKSVIMSRSCEVILADNVGQEITRYKAQYGSILLVTDGQEVTKGTALVVWDPYAMPIVTEKSGYVMFKDMIDGVSVKDIIDESTGIVNRVIIEPKQGRGEVVLRPRICLLDQNKQPLTLSNGLEAEYFLPVNSILSVEEGVNVSAGDILARIPREFAGTKDITGGLPRVIELFEARKPKNHAVIAEIDGCVKFGKDYKSKRRLILQPNDESHEPIEYILPKGRHVTVNEGDVVKKGDMLIEGSPVLQDILKVMGVEALGLYIINEIQAVYRLQGVKIDNKHIEVIITRMLQKVEITDSGDSNFVIEEKVNKRAVINTNKKLKAKGLREAQYRPILQGITKASLQTESFISAASFQETTRVLTEAAIAGKVDKLEGLKENVIVGQTIPAGTGFYINEIKKIARQRDKEIIAARDAELQENNTEA.

Residues C73, C75, C88, and C91 each coordinate Zn(2+). 3 residues coordinate Mg(2+): D467, D469, and D471. Residues C817, C891, C898, and C901 each coordinate Zn(2+).

The protein belongs to the RNA polymerase beta' chain family. In terms of assembly, the RNAP catalytic core consists of 2 alpha, 1 beta, 1 beta' and 1 omega subunit. When a sigma factor is associated with the core the holoenzyme is formed, which can initiate transcription. Mg(2+) serves as cofactor. It depends on Zn(2+) as a cofactor.

The enzyme catalyses RNA(n) + a ribonucleoside 5'-triphosphate = RNA(n+1) + diphosphate. Functionally, DNA-dependent RNA polymerase catalyzes the transcription of DNA into RNA using the four ribonucleoside triphosphates as substrates. The protein is DNA-directed RNA polymerase subunit beta' of Orientia tsutsugamushi (strain Ikeda) (Rickettsia tsutsugamushi).